The chain runs to 733 residues: Protein psiM (733 aa).

Residues 1–26 (MKKINNNKIFVLFLTILLYLLNITTA) form the signal peptide. N-linked (GlcNAc...) asparagine glycans are attached at residues N22, N65, and N96. Residues 27–672 (QKPVSINIKI…VCQKAALVST (646 aa)) are Extracellular-facing. A PA14 domain is found at 114 to 260 (NYDSDSGNYI…YDYCGVCNGD (147 aa)). N-linked (GlcNAc...) asparagine glycans are attached at residues N277, N336, N379, N428, N471, N537, N573, and N641. Residues 673–693 (AVIASVVVVGAVVLGAAIFAG) form a helical membrane-spanning segment. Residues 694–733 (KKGYDAWKTSQGNVMAASQANPLYTQSSNGGENPLYNSPT) are Cytoplasmic-facing.

Belongs to the prespore-cell-inducing factor family.

The protein resides in the membrane. This Dictyostelium discoideum (Social amoeba) protein is Protein psiM (psiM).